Consider the following 350-residue polypeptide: Ribosomal RNA large subunit methyltransferase M (350 aa).

Residues Ser184, 217 to 220 (APGG), Asp236, Asp256, and Asp272 contribute to the S-adenosyl-L-methionine site. The active-site Proton acceptor is Lys301.

The protein belongs to the class I-like SAM-binding methyltransferase superfamily. RNA methyltransferase RlmE family. RlmM subfamily. Monomer.

It localises to the cytoplasm. The enzyme catalyses cytidine(2498) in 23S rRNA + S-adenosyl-L-methionine = 2'-O-methylcytidine(2498) in 23S rRNA + S-adenosyl-L-homocysteine + H(+). Catalyzes the 2'-O-methylation at nucleotide C2498 in 23S rRNA. This chain is Ribosomal RNA large subunit methyltransferase M, found in Marinomonas sp. (strain MWYL1).